Here is a 129-residue protein sequence, read N- to C-terminus: Small ribosomal subunit protein uS11 (129 aa).

It belongs to the universal ribosomal protein uS11 family. As to quaternary structure, part of the 30S ribosomal subunit. Interacts with proteins S7 and S18. Binds to IF-3.

Functionally, located on the platform of the 30S subunit, it bridges several disparate RNA helices of the 16S rRNA. Forms part of the Shine-Dalgarno cleft in the 70S ribosome. The polypeptide is Small ribosomal subunit protein uS11 (Nitratidesulfovibrio vulgaris (strain DSM 19637 / Miyazaki F) (Desulfovibrio vulgaris)).